The sequence spans 185 residues: Elongation factor P (185 aa).

This sequence belongs to the elongation factor P family.

Its subcellular location is the cytoplasm. It participates in protein biosynthesis; polypeptide chain elongation. In terms of biological role, involved in peptide bond synthesis. Stimulates efficient translation and peptide-bond synthesis on native or reconstituted 70S ribosomes in vitro. Probably functions indirectly by altering the affinity of the ribosome for aminoacyl-tRNA, thus increasing their reactivity as acceptors for peptidyl transferase. This chain is Elongation factor P, found in Brevibacillus brevis (strain 47 / JCM 6285 / NBRC 100599).